A 158-amino-acid chain; its full sequence is Large ribosomal subunit protein uL11 (158 aa).

The protein belongs to the universal ribosomal protein uL11 family. In terms of assembly, part of the ribosomal stalk of the 50S ribosomal subunit. Interacts with L10 and the large rRNA to form the base of the stalk. L10 forms an elongated spine to which L12 dimers bind in a sequential fashion forming a multimeric L10(L12)X complex.

In terms of biological role, forms part of the ribosomal stalk which helps the ribosome interact with GTP-bound translation factors. The polypeptide is Large ribosomal subunit protein uL11 (Methanoregula boonei (strain DSM 21154 / JCM 14090 / 6A8)).